We begin with the raw amino-acid sequence, 448 residues long: Glucose-6-phosphate isomerase (448 aa).

Glutamate 290 functions as the Proton donor in the catalytic mechanism. Active-site residues include histidine 311 and lysine 425.

Belongs to the GPI family.

It is found in the cytoplasm. The enzyme catalyses alpha-D-glucose 6-phosphate = beta-D-fructose 6-phosphate. It participates in carbohydrate biosynthesis; gluconeogenesis. The protein operates within carbohydrate degradation; glycolysis; D-glyceraldehyde 3-phosphate and glycerone phosphate from D-glucose: step 2/4. Functionally, catalyzes the reversible isomerization of glucose-6-phosphate to fructose-6-phosphate. The protein is Glucose-6-phosphate isomerase of Acetivibrio thermocellus (strain ATCC 27405 / DSM 1237 / JCM 9322 / NBRC 103400 / NCIMB 10682 / NRRL B-4536 / VPI 7372) (Clostridium thermocellum).